Here is a 100-residue protein sequence, read N- to C-terminus: Urease subunit gamma (100 aa).

Belongs to the urease gamma subunit family. As to quaternary structure, heterotrimer of UreA (gamma), UreB (beta) and UreC (alpha) subunits. Three heterotrimers associate to form the active enzyme.

Its subcellular location is the cytoplasm. It carries out the reaction urea + 2 H2O + H(+) = hydrogencarbonate + 2 NH4(+). It functions in the pathway nitrogen metabolism; urea degradation; CO(2) and NH(3) from urea (urease route): step 1/1. This chain is Urease subunit gamma, found in Limosilactobacillus fermentum (Lactobacillus fermentum).